A 339-amino-acid polypeptide reads, in one-letter code: Ribosome biogenesis protein BRX1 homolog (339 aa).

Residues 1 to 34 (MSAYKRKRGSLPEVATNTKKAKKQLAGSEQEATA) are disordered. Positions 53–242 (ERVLIFSSRG…LIKIFKGSFG (190 aa)) constitute a Brix domain. Positions 304–339 (AEEKPQVIETEPPAPKPKMKRKDKQFKRQRMAKKRM) are disordered. Basic residues predominate over residues 320-339 (PKMKRKDKQFKRQRMAKKRM).

It belongs to the BRX1 family. Ubiquitous.

Its subcellular location is the nucleus. The protein localises to the nucleolus. In terms of biological role, required for biogenesis of the 60S ribosomal subunit. The polypeptide is Ribosome biogenesis protein BRX1 homolog (brix1) (Xenopus laevis (African clawed frog)).